Consider the following 117-residue polypeptide: Putative iron-sulfur cluster insertion protein ErpA (117 aa).

Iron-sulfur cluster is bound by residues C45, C109, and C111.

It belongs to the HesB/IscA family. Homodimer. Iron-sulfur cluster serves as cofactor.

Its function is as follows. Required for insertion of 4Fe-4S clusters. This Chromobacterium violaceum (strain ATCC 12472 / DSM 30191 / JCM 1249 / CCUG 213 / NBRC 12614 / NCIMB 9131 / NCTC 9757 / MK) protein is Putative iron-sulfur cluster insertion protein ErpA.